The chain runs to 622 residues: tRNA uridine 5-carboxymethylaminomethyl modification enzyme MnmG (622 aa).

Position 10 to 15 (10 to 15 (GGGHAG)) interacts with FAD. 269 to 283 (GPRYCPSVEDKIVKF) lines the NAD(+) pocket.

This sequence belongs to the MnmG family. In terms of assembly, homodimer. Heterotetramer of two MnmE and two MnmG subunits. FAD is required as a cofactor.

Its subcellular location is the cytoplasm. Functionally, NAD-binding protein involved in the addition of a carboxymethylaminomethyl (cmnm) group at the wobble position (U34) of certain tRNAs, forming tRNA-cmnm(5)s(2)U34. The protein is tRNA uridine 5-carboxymethylaminomethyl modification enzyme MnmG of Bartonella quintana (strain Toulouse) (Rochalimaea quintana).